We begin with the raw amino-acid sequence, 201 residues long: Lipoprotein signal peptidase (201 aa).

Helical transmembrane passes span 73–93 (SNAIFLITNTIIVCYLYYLMI) and 97–117 (TIGSFAGYSFVIGGAVGNLID). Catalysis depends on residues aspartate 126 and aspartate 144. A helical membrane pass occupies residues 135–155 (YSFPVFNLADCFIIIGVIILI).

This sequence belongs to the peptidase A8 family.

The protein resides in the cell inner membrane. It carries out the reaction Release of signal peptides from bacterial membrane prolipoproteins. Hydrolyzes -Xaa-Yaa-Zaa-|-(S,diacylglyceryl)Cys-, in which Xaa is hydrophobic (preferably Leu), and Yaa (Ala or Ser) and Zaa (Gly or Ala) have small, neutral side chains.. It functions in the pathway protein modification; lipoprotein biosynthesis (signal peptide cleavage). In terms of biological role, this protein specifically catalyzes the removal of signal peptides from prolipoproteins. This Rickettsia conorii (strain ATCC VR-613 / Malish 7) protein is Lipoprotein signal peptidase.